The primary structure comprises 174 residues: Large ribosomal subunit protein uL10 (174 aa).

Belongs to the universal ribosomal protein uL10 family. As to quaternary structure, part of the ribosomal stalk of the 50S ribosomal subunit. The N-terminus interacts with L11 and the large rRNA to form the base of the stalk. The C-terminus forms an elongated spine to which L12 dimers bind in a sequential fashion forming a multimeric L10(L12)X complex.

Forms part of the ribosomal stalk, playing a central role in the interaction of the ribosome with GTP-bound translation factors. The polypeptide is Large ribosomal subunit protein uL10 (Desulfovibrio desulfuricans (strain ATCC 27774 / DSM 6949 / MB)).